Here is a 72-residue protein sequence, read N- to C-terminus: Translation initiation factor IF-1 (72 aa).

Residues 1-72 form the S1-like domain; the sequence is MAKQSAIEKD…SKGRIAFRYK (72 aa).

It belongs to the IF-1 family. As to quaternary structure, component of the 30S ribosomal translation pre-initiation complex which assembles on the 30S ribosome in the order IF-2 and IF-3, IF-1 and N-formylmethionyl-tRNA(fMet); mRNA recruitment can occur at any time during PIC assembly.

Its subcellular location is the cytoplasm. Functionally, one of the essential components for the initiation of protein synthesis. Stabilizes the binding of IF-2 and IF-3 on the 30S subunit to which N-formylmethionyl-tRNA(fMet) subsequently binds. Helps modulate mRNA selection, yielding the 30S pre-initiation complex (PIC). Upon addition of the 50S ribosomal subunit IF-1, IF-2 and IF-3 are released leaving the mature 70S translation initiation complex. The protein is Translation initiation factor IF-1 of Parabacteroides distasonis (strain ATCC 8503 / DSM 20701 / CIP 104284 / JCM 5825 / NCTC 11152).